The chain runs to 113 residues: MAIWGSSSSNTASSGEADIKTHLMNQVRQEAAVTNARNLIGKVNEHCFEACIPNPGTSLSSAEHTCLSQCMEKYISFWNAVSRGYIARLANERKAYGGGALDASFVQSGESSL.

The Twin CX3C motif signature appears at 47–70; that stretch reads CFEACIPNPGTSLSSAEHTCLSQC. Cystine bridges form between C47–C70 and C51–C66.

This sequence belongs to the small Tim family. Heterohexamer; composed of 3 copies of TIM8 and 3 copies of TIM13, named soluble 70 kDa complex. Associates with the TIM22 complex, whose core is composed of TIM22 and TIM54. Interacts with the transmembrane regions of multi-pass transmembrane proteins in transit.

It is found in the mitochondrion inner membrane. Functionally, mitochondrial intermembrane chaperone that participates in the import and insertion of some multi-pass transmembrane proteins into the mitochondrial inner membrane. Also required for the transfer of beta-barrel precursors from the TOM complex to the sorting and assembly machinery (SAM complex) of the outer membrane. Acts as a chaperone-like protein that protects the hydrophobic precursors from aggregation and guide them through the mitochondrial intermembrane space. The TIM8-TIM13 complex is non essential and only mediates the import of few proteins, while the predominant TIM9-TIM10 70 kDa complex is crucial and mediates the import of much more proteins. This Aspergillus fumigatus (strain ATCC MYA-4609 / CBS 101355 / FGSC A1100 / Af293) (Neosartorya fumigata) protein is Mitochondrial import inner membrane translocase subunit tim13 (tim13).